A 121-amino-acid polypeptide reads, in one-letter code: Small ribosomal subunit protein bS6 (121 aa).

The protein belongs to the bacterial ribosomal protein bS6 family.

Its function is as follows. Binds together with bS18 to 16S ribosomal RNA. The sequence is that of Small ribosomal subunit protein bS6 from Pelagibacter ubique (strain HTCC1062).